The chain runs to 94 residues: ATP synthase subunit c (94 aa).

2 helical membrane passes run 15-35 (IGVG…WGLI) and 58-78 (FIFA…AMWF).

This sequence belongs to the ATPase C chain family. As to quaternary structure, F-type ATPases have 2 components, F(1) - the catalytic core - and F(0) - the membrane proton channel. F(1) has five subunits: alpha(3), beta(3), gamma(1), delta(1), epsilon(1). F(0) has three main subunits: a(1), b(2) and c(10-14). The alpha and beta chains form an alternating ring which encloses part of the gamma chain. F(1) is attached to F(0) by a central stalk formed by the gamma and epsilon chains, while a peripheral stalk is formed by the delta and b chains.

Its subcellular location is the cell inner membrane. F(1)F(0) ATP synthase produces ATP from ADP in the presence of a proton or sodium gradient. F-type ATPases consist of two structural domains, F(1) containing the extramembraneous catalytic core and F(0) containing the membrane proton channel, linked together by a central stalk and a peripheral stalk. During catalysis, ATP synthesis in the catalytic domain of F(1) is coupled via a rotary mechanism of the central stalk subunits to proton translocation. Functionally, key component of the F(0) channel; it plays a direct role in translocation across the membrane. A homomeric c-ring of between 10-14 subunits forms the central stalk rotor element with the F(1) delta and epsilon subunits. This chain is ATP synthase subunit c, found in Hydrogenovibrio crunogenus (strain DSM 25203 / XCL-2) (Thiomicrospira crunogena).